Consider the following 147-residue polypeptide: 3-dehydroquinate dehydratase (147 aa).

The active-site Proton acceptor is the tyrosine 23. Substrate is bound by residues asparagine 75, histidine 81, and aspartate 88. The active-site Proton donor is histidine 101. Residues 102–103 (LS) and arginine 112 each bind substrate.

The protein belongs to the type-II 3-dehydroquinase family. Homododecamer.

It catalyses the reaction 3-dehydroquinate = 3-dehydroshikimate + H2O. The protein operates within metabolic intermediate biosynthesis; chorismate biosynthesis; chorismate from D-erythrose 4-phosphate and phosphoenolpyruvate: step 3/7. Its function is as follows. Catalyzes a trans-dehydration via an enolate intermediate. In Stutzerimonas stutzeri (strain A1501) (Pseudomonas stutzeri), this protein is 3-dehydroquinate dehydratase.